The chain runs to 86 residues: V-type proton ATPase subunit e (86 aa).

Residues 1–21 (MGILIPLVSVSAFWAIIGFGG) form a helical membrane-spanning segment. Over 22–32 (PWIVPKGPNRG) the chain is Cytoplasmic. The helical transmembrane segment at 33–53 (IIQLMIIMTAVCCWMFWIMVF) threads the bilayer. The Lumenal segment spans residues 54–86 (LHQLNPLIGPQINVKTIRWISEKWGDAPNVINN).

Belongs to the V-ATPase e1/e2 subunit family. V-ATPase is a heteromultimeric enzyme made up of two complexes: the ATP-hydrolytic V1 complex and the proton translocation V0 complex. The V1 complex consists of three catalytic AB heterodimers that form a heterohexamer, three peripheral stalks each consisting of EG heterodimers, one central rotor including subunits D and F, and the regulatory subunits C and H. The proton translocation complex V0 consists of the proton transport subunit a, a ring of proteolipid subunits c9c'', rotary subunit d, subunits e and f, and the accessory subunits vah-19/Ac45 and vah-20/PRR.

The protein resides in the apical cell membrane. Its function is as follows. Subunit of the V0 complex of vacuolar(H+)-ATPase (V-ATPase), a multisubunit enzyme composed of a peripheral complex (V1) that hydrolyzes ATP and a membrane integral complex (V0) that translocates protons. V-ATPase is responsible for acidifying and maintaining the pH of intracellular compartments and in some cell types, is targeted to the plasma membrane, where it is responsible for acidifying the extracellular environment. During embryonic development, the V-ATPase is required to repress fusion of epidermal cells probably by negatively regulating eff-1-mediated cell fusion. The sequence is that of V-type proton ATPase subunit e from Caenorhabditis elegans.